The primary structure comprises 729 residues: MPQHPGLPPGHPMAPGQHPNAHPGAGMVQAVHPGVSAPGGPQVTQGGPMMGMPPGAGTTGPGGPVQAHALSHLGPAQAHLFQQPQFAQTFANNPQLLQQHQHQQQILRQRMMFQQQQAAQQQQHAGLPVSLPNGTQGLNAAQLAAMQANSGMRPVNLQMHLQQMPHGPQNIQQQQQQLFAMQQAQQAQQAHQAQQAQQAQQAQQAAAAAAAAAAQPGQHTPQQRHAAHPQNMHDAQSVTPQPQPPPHQGSSTPQSNPPQPPSSQPQQQPGAAPQPHPTPNPPPQQLPQAQQPGQQPHQQPQQPPQQQPQQQQSQQGQPQGQQQQMTPQEAQMKAQQTQNQAAMMMQQRMGMKGTSILALLTFAEHLSNFTSRGEAQDLLYWQAFVDKFYSPVGVLRQGVYNPQAGSKQFEISTPALARYYLTQFTSGIRQIQMLVEGARERDSPNGGRIVESRRTSFIYWFTNESQLFTNGTLIAHFDHNNKIEMLDIVVMNHTEYLPRSQLQPLELSEQKQSPKVSKNLGKRAQQKQAQQAAPSLPESMVTANGVPTAVMSFLEVAETISHMQMLFQFSQQNPQFSPPEALRNLVNTLQSQNPNPGFMPSPMNPAMQQGQNLRGPQMNGPNQFASPAMAHLGLPPQGSPHLSAHPSPAQSHLAGPPGMVQQGQMQPNVGQATSASASPQVTNKRRRASTVKVENDDTGGPEVNGTATQGAAKVKASPRVGGKRQKGTA.

Residues 1–12 (MPQHPGLPPGHP) are compositionally biased toward pro residues. Disordered regions lie at residues 1–69 (MPQH…QAHA), 207–341 (AAAA…QNQA), 505–538 (LELS…SLPE), and 614–729 (RGPQ…KGTA). Residues 38–56 (PGGPQVTQGGPMMGMPPGA) are compositionally biased toward low complexity. The segment covering 272-285 (APQPHPTPNPPPQQ) has biased composition (pro residues). Composition is skewed to low complexity over residues 286-300 (LPQA…HQQP) and 307-341 (QPQQ…QNQA). The segment covering 614–625 (RGPQMNGPNQFA) has biased composition (polar residues). Over residues 655-671 (GPPGMVQQGQMQPNVGQ) the composition is skewed to low complexity. The span at 672-682 (ATSASASPQVT) shows a compositional bias: polar residues.

This sequence belongs to the MFG1 family. Interacts with somA.

The protein resides in the nucleus. Transcriptional regulator that forms a complex with somA to control biofilm formation. In Aspergillus fumigatus (strain ATCC MYA-4609 / CBS 101355 / FGSC A1100 / Af293) (Neosartorya fumigata), this protein is Transcriptional activator ptaB.